The chain runs to 299 residues: Putative activator of 90 kDa heat shock protein ATPase homolog 2 (299 aa).

It belongs to the AHA1 family.

In terms of biological role, co-chaperone that stimulates HSP90 ATPase activity. The protein is Putative activator of 90 kDa heat shock protein ATPase homolog 2 of Homo sapiens (Human).